Here is a 508-residue protein sequence, read N- to C-terminus: MGLPWYRVHTVVLNDPGRLLSVHIMHTALVSGWAGSMVLYELAVFDPSDPVLDPMWRQGMFVIPFMTRLGITNSWGGWSITGGTITNPGIWSYEGVAGAHIMLSGLCFLAAIWHWVYWDLEIFRDERTGKPSLDLPKIFGIHLFLAGVACFGFGAFHVTGLYGPGIWVSDPYGLTGKVQPVNPSWGAEGFDPFVPGGIASHHIAAGTLGILAGLFHLSVRPPQRLYKGLRMGNIETVLSSSIAAVFFAAFVVAGTMWYGSATTPIELFGPTRYQWDQGYFQQEIYRRVSAGLAENLSLSEAWSKIPEKLAFYDYIGNNPAKGGLFRAGSMDNGDGIAVGWLGHPVFRDKEGHELFVRRMPTFFETFPVVLVDGDGIVRADVPFRRAESKYSVEQVGVTVEFYGGELNGVSYSDPATVKKYARRAQLGEIFELDRATLKSDGVFRSSPRGWFTFGHASFALLFFFGHIWHGARTLFRDVFAGIDPDLDSQVEFGTFQKIGDPTTRRQAV.

A run of 6 helical transmembrane segments spans residues Ser21 to Ser36, Ile101 to Trp115, Gly140 to Phe156, Ile203 to Ser218, Val237 to Val252, and Ser457 to Arg472.

The protein belongs to the PsbB/PsbC family. PsbB subfamily. In terms of assembly, PSII is composed of 1 copy each of membrane proteins PsbA, PsbB, PsbC, PsbD, PsbE, PsbF, PsbH, PsbI, PsbJ, PsbK, PsbL, PsbM, PsbT, PsbX, PsbY, PsbZ, Psb30/Ycf12, at least 3 peripheral proteins of the oxygen-evolving complex and a large number of cofactors. It forms dimeric complexes. It depends on Binds multiple chlorophylls. PSII binds additional chlorophylls, carotenoids and specific lipids. as a cofactor.

The protein resides in the plastid. Its subcellular location is the chloroplast thylakoid membrane. Its function is as follows. One of the components of the core complex of photosystem II (PSII). It binds chlorophyll and helps catalyze the primary light-induced photochemical processes of PSII. PSII is a light-driven water:plastoquinone oxidoreductase, using light energy to abstract electrons from H(2)O, generating O(2) and a proton gradient subsequently used for ATP formation. This chain is Photosystem II CP47 reaction center protein, found in Piper cenocladum (Ant piper).